The chain runs to 301 residues: GTPase Era (301 aa).

The Era-type G domain maps to 6-173 (KSGFVAIVGR…LEQTNANLEI (168 aa)). Residues 14 to 21 (GRPNVGKS) are G1. Position 14 to 21 (14 to 21 (GRPNVGKS)) interacts with GTP. A G2 region spans residues 40-44 (QTTRN). The tract at residues 61 to 64 (DTPG) is G3. Residues 61-65 (DTPGI) and 123-126 (NKID) each bind GTP. Residues 123–126 (NKID) form a G4 region. Positions 152-154 (ISA) are G5. The KH type-2 domain maps to 204–282 (TREEVPHSVA…FLEIWVKVQK (79 aa)).

This sequence belongs to the TRAFAC class TrmE-Era-EngA-EngB-Septin-like GTPase superfamily. Era GTPase family. As to quaternary structure, monomer.

It is found in the cytoplasm. Its subcellular location is the cell membrane. Functionally, an essential GTPase that binds both GDP and GTP, with rapid nucleotide exchange. Plays a role in 16S rRNA processing and 30S ribosomal subunit biogenesis and possibly also in cell cycle regulation and energy metabolism. This chain is GTPase Era, found in Listeria innocua serovar 6a (strain ATCC BAA-680 / CLIP 11262).